We begin with the raw amino-acid sequence, 198 residues long: UPF0548 protein DR_2035 (198 aa).

Belongs to the UPF0548 family.

This Deinococcus radiodurans (strain ATCC 13939 / DSM 20539 / JCM 16871 / CCUG 27074 / LMG 4051 / NBRC 15346 / NCIMB 9279 / VKM B-1422 / R1) protein is UPF0548 protein DR_2035.